The sequence spans 87 residues: Small ribosomal subunit protein uS15 (87 aa).

This sequence belongs to the universal ribosomal protein uS15 family. Part of the 30S ribosomal subunit. Forms a bridge to the 50S subunit in the 70S ribosome, contacting the 23S rRNA.

Its function is as follows. One of the primary rRNA binding proteins, it binds directly to 16S rRNA where it helps nucleate assembly of the platform of the 30S subunit by binding and bridging several RNA helices of the 16S rRNA. In terms of biological role, forms an intersubunit bridge (bridge B4) with the 23S rRNA of the 50S subunit in the ribosome. The chain is Small ribosomal subunit protein uS15 from Clostridium acetobutylicum (strain ATCC 824 / DSM 792 / JCM 1419 / IAM 19013 / LMG 5710 / NBRC 13948 / NRRL B-527 / VKM B-1787 / 2291 / W).